The primary structure comprises 474 residues: Siroheme synthase (474 aa).

Residues 1–202 (MEYLPIFIDL…GRPKEANKVL (202 aa)) are precorrin-2 dehydrogenase /sirohydrochlorin ferrochelatase. NAD(+) contacts are provided by residues 22–23 (AV) and 41–42 (PA). At Ser-126 the chain carries Phosphoserine. A uroporphyrinogen-III C-methyltransferase region spans residues 218 to 474 (GHVTLVGAGP…YLINSIINLI (257 aa)). Pro-227 lines the S-adenosyl-L-methionine pocket. The Proton acceptor role is filled by Asp-250. Catalysis depends on Lys-272, which acts as the Proton donor. Residues 303-305 (GGD), Ile-308, 333-334 (TA), Met-385, and Gly-414 contribute to the S-adenosyl-L-methionine site.

It in the N-terminal section; belongs to the precorrin-2 dehydrogenase / sirohydrochlorin ferrochelatase family. This sequence in the C-terminal section; belongs to the precorrin methyltransferase family.

The enzyme catalyses uroporphyrinogen III + 2 S-adenosyl-L-methionine = precorrin-2 + 2 S-adenosyl-L-homocysteine + H(+). It catalyses the reaction precorrin-2 + NAD(+) = sirohydrochlorin + NADH + 2 H(+). The catalysed reaction is siroheme + 2 H(+) = sirohydrochlorin + Fe(2+). The protein operates within cofactor biosynthesis; adenosylcobalamin biosynthesis; precorrin-2 from uroporphyrinogen III: step 1/1. It participates in cofactor biosynthesis; adenosylcobalamin biosynthesis; sirohydrochlorin from precorrin-2: step 1/1. Its pathway is porphyrin-containing compound metabolism; siroheme biosynthesis; precorrin-2 from uroporphyrinogen III: step 1/1. It functions in the pathway porphyrin-containing compound metabolism; siroheme biosynthesis; siroheme from sirohydrochlorin: step 1/1. The protein operates within porphyrin-containing compound metabolism; siroheme biosynthesis; sirohydrochlorin from precorrin-2: step 1/1. Functionally, multifunctional enzyme that catalyzes the SAM-dependent methylations of uroporphyrinogen III at position C-2 and C-7 to form precorrin-2 via precorrin-1. Then it catalyzes the NAD-dependent ring dehydrogenation of precorrin-2 to yield sirohydrochlorin. Finally, it catalyzes the ferrochelation of sirohydrochlorin to yield siroheme. This chain is Siroheme synthase, found in Blochmanniella pennsylvanica (strain BPEN).